We begin with the raw amino-acid sequence, 268 residues long: Phosphoethanolamine/phosphocholine phosphatase (268 aa).

The active-site Nucleophile is D32. Mg(2+) is bound by residues D32 and D34. The Proton donor role is filled by D34. Substrate is bound by residues D43 and D123. D203 contacts Mg(2+).

It belongs to the HAD-like hydrolase superfamily. PHOSPHO family. Requires Mg(2+) as cofactor. In terms of tissue distribution, expressed at sites of mineralization in bone and cartilage. Highly expressed in hypertrophic chondrocytes compared to non-chondrogenic tissues. Expressed in chondrocytes but not in heart, liver, lung, kidney, spleen, muscle, adipose tissues not duodenum. In diaphyseal cortical bone, it is expressed in the osteoid layer of the periosteum, forming surfaces of growing osteons, and newly formed osteocytes, whereas it is not expressed in the endosteum and closed osteons. In growth plate cartilage, it is limited to the early hypertrophic chondrocytes and the ossification groove of Ranvier. Highly expressed on the mineralization surfaces of the cartilage remnants and trabecular bone within the primary spongiosa. Expressed in 17-day-old embryonic calvaria, the osteoid present on the intramembranous and periosteal bone surfaces but not in soft tissues examined.

Its subcellular location is the extracellular vesicle. It carries out the reaction phosphoethanolamine + H2O = ethanolamine + phosphate. The catalysed reaction is phosphocholine + H2O = choline + phosphate. Phosphatase that has a high activity toward phosphoethanolamine (PEA) and phosphocholine (PCho). Involved in the generation of inorganic phosphate for bone mineralization. In Gallus gallus (Chicken), this protein is Phosphoethanolamine/phosphocholine phosphatase (PHOSPHO1).